The primary structure comprises 196 residues: uncharacterized protein (196 aa).

Belongs to the NAD(P)H dehydrogenase (quinone) family.

This is an uncharacterized protein from Escherichia coli (strain K12).